We begin with the raw amino-acid sequence, 393 residues long: NADH-quinone oxidoreductase subunit D 2 (393 aa).

It belongs to the complex I 49 kDa subunit family. As to quaternary structure, NDH-1 is composed of 14 different subunits. Subunits NuoB, C, D, E, F, and G constitute the peripheral sector of the complex.

The protein localises to the cell inner membrane. It catalyses the reaction a quinone + NADH + 5 H(+)(in) = a quinol + NAD(+) + 4 H(+)(out). Functionally, NDH-1 shuttles electrons from NADH, via FMN and iron-sulfur (Fe-S) centers, to quinones in the respiratory chain. The immediate electron acceptor for the enzyme in this species is believed to be a menaquinone. Couples the redox reaction to proton translocation (for every two electrons transferred, four hydrogen ions are translocated across the cytoplasmic membrane), and thus conserves the redox energy in a proton gradient. The polypeptide is NADH-quinone oxidoreductase subunit D 2 (Cytophaga hutchinsonii (strain ATCC 33406 / DSM 1761 / CIP 103989 / NBRC 15051 / NCIMB 9469 / D465)).